The following is a 188-amino-acid chain: GMP synthase [glutamine-hydrolyzing] subunit A (188 aa).

The region spanning 2–188 (KVAVIYFGGQ…FKNFIKICRK (187 aa)) is the Glutamine amidotransferase type-1 domain. Catalysis depends on cysteine 79, which acts as the Nucleophile. Active-site residues include histidine 166 and glutamate 168.

In terms of assembly, heterodimer composed of a glutamine amidotransferase subunit (A) and a GMP-binding subunit (B).

The enzyme catalyses XMP + L-glutamine + ATP + H2O = GMP + L-glutamate + AMP + diphosphate + 2 H(+). Its pathway is purine metabolism; GMP biosynthesis; GMP from XMP (L-Gln route): step 1/1. In terms of biological role, catalyzes the synthesis of GMP from XMP. This Sulfolobus acidocaldarius (strain ATCC 33909 / DSM 639 / JCM 8929 / NBRC 15157 / NCIMB 11770) protein is GMP synthase [glutamine-hydrolyzing] subunit A.